Consider the following 487-residue polypeptide: N-succinylglutamate 5-semialdehyde dehydrogenase (487 aa).

221–226 is an NAD(+) binding site; that stretch reads GSSDTG. Residues Glu244 and Cys278 contribute to the active site.

Belongs to the aldehyde dehydrogenase family. AstD subfamily.

It catalyses the reaction N-succinyl-L-glutamate 5-semialdehyde + NAD(+) + H2O = N-succinyl-L-glutamate + NADH + 2 H(+). Its pathway is amino-acid degradation; L-arginine degradation via AST pathway; L-glutamate and succinate from L-arginine: step 4/5. Catalyzes the NAD-dependent reduction of succinylglutamate semialdehyde into succinylglutamate. This chain is N-succinylglutamate 5-semialdehyde dehydrogenase, found in Burkholderia cenocepacia (strain HI2424).